The primary structure comprises 270 residues: Formamidopyrimidine-DNA glycosylase (270 aa).

Residue Pro-2 is the Schiff-base intermediate with DNA of the active site. Catalysis depends on Glu-3, which acts as the Proton donor. Lys-58 acts as the Proton donor; for beta-elimination activity in catalysis. Residues His-91, Arg-110, and Arg-151 each contribute to the DNA site. The FPG-type zinc-finger motif lies at 236–270 (FVYGRGGMPCKLCGTTLREAKLGQRASVYCPRCQR). Residue Arg-260 is the Proton donor; for delta-elimination activity of the active site.

This sequence belongs to the FPG family. In terms of assembly, monomer. Zn(2+) serves as cofactor.

The enzyme catalyses Hydrolysis of DNA containing ring-opened 7-methylguanine residues, releasing 2,6-diamino-4-hydroxy-5-(N-methyl)formamidopyrimidine.. It carries out the reaction 2'-deoxyribonucleotide-(2'-deoxyribose 5'-phosphate)-2'-deoxyribonucleotide-DNA = a 3'-end 2'-deoxyribonucleotide-(2,3-dehydro-2,3-deoxyribose 5'-phosphate)-DNA + a 5'-end 5'-phospho-2'-deoxyribonucleoside-DNA + H(+). Involved in base excision repair of DNA damaged by oxidation or by mutagenic agents. Acts as a DNA glycosylase that recognizes and removes damaged bases. Has a preference for oxidized purines, such as 7,8-dihydro-8-oxoguanine (8-oxoG). Has AP (apurinic/apyrimidinic) lyase activity and introduces nicks in the DNA strand. Cleaves the DNA backbone by beta-delta elimination to generate a single-strand break at the site of the removed base with both 3'- and 5'-phosphates. The chain is Formamidopyrimidine-DNA glycosylase from Pseudomonas putida (strain W619).